The chain runs to 356 residues: Phosphate acyltransferase (356 aa).

It belongs to the PlsX family. In terms of assembly, homodimer. Probably interacts with PlsY.

It localises to the cytoplasm. The catalysed reaction is a fatty acyl-[ACP] + phosphate = an acyl phosphate + holo-[ACP]. Its pathway is lipid metabolism; phospholipid metabolism. In terms of biological role, catalyzes the reversible formation of acyl-phosphate (acyl-PO(4)) from acyl-[acyl-carrier-protein] (acyl-ACP). This enzyme utilizes acyl-ACP as fatty acyl donor, but not acyl-CoA. In Escherichia coli (strain K12 / DH10B), this protein is Phosphate acyltransferase.